The following is a 227-amino-acid chain: MQQQHLMQMNQGMMGGYASPTTVTTDLIQQYLDENKQLILAILDNQNNGKVEECARNQAKLQHNLMYLAAIADSQPPQTAAMSQYPSNLMMQSGARYMPQQSAQMMAPQSLMAARSSMMYAQPALSPLQQQQQQQAAAAHGQLGMGSGGTTSGFSILHGEASMGGGGGGGGAGNSMMNAGVFSDFGRGGGGGGKEGSTSLSVDVRGANSGAQSGDGEYLKGTEEEGS.

The span at 124 to 139 (ALSPLQQQQQQQAAAA) shows a compositional bias: low complexity. Disordered stretches follow at residues 124-160 (ALSP…LHGE) and 188-227 (GGGG…EEGS). The span at 217–227 (EYLKGTEEEGS) shows a compositional bias: basic and acidic residues.

The protein belongs to the SS18 family. Interacts with GRF4. As to expression, highly expressed in internodes, nodes, developing spikelets and developing anthers. Expressed at low levels in roots and mature glumes.

Its subcellular location is the nucleus. The protein resides in the cytoplasm. Transcription coactivator that plays a role in the regulation of meristematic function in leaves, stems and inflorescences. May regulate leaf size, length of stem internodes, and seed size by promoting cell expansion. Transcription coactivator that plays a role in the regulation of grain size. Component of a network formed by the microRNA396 (miRNA396), the GRFs and their interacting factors (GIFs) acting in the regulation of meristem function, at least partially through the control of cell proliferation. Component of the miRNA396c-GRF4-GIF1 regulatory module that plays an important role in grain size determination. This chain is GRF-interacting factor 1, found in Oryza sativa subsp. japonica (Rice).